The primary structure comprises 221 residues: Urease accessory protein UreG (221 aa).

GTP is bound at residue 19–26 (GPVGSGKT).

It belongs to the SIMIBI class G3E GTPase family. UreG subfamily. Homodimer. UreD, UreF and UreG form a complex that acts as a GTP-hydrolysis-dependent molecular chaperone, activating the urease apoprotein by helping to assemble the nickel containing metallocenter of UreC. The UreE protein probably delivers the nickel.

It is found in the cytoplasm. In terms of biological role, facilitates the functional incorporation of the urease nickel metallocenter. This process requires GTP hydrolysis, probably effectuated by UreG. Functionally, expression of the urease operon increases the likelihood of bacterial survival by contributing to acid resistance in vitro and in vivo in BALB/c mice. Y.enterocolitica enters the body via an oral path and must survive the acidic stomach before being able to colonize the intestinal mucosa. The protein is Urease accessory protein UreG of Yersinia enterocolitica.